The chain runs to 69 residues: Guanine nucleotide-binding protein G(I)/G(S)/G(O) subunit gamma-T2 (69 aa).

Position 66 is a cysteine methyl ester (C66). C66 carries the S-farnesyl cysteine lipid modification. The propeptide at 67–69 (VLS) is removed in mature form.

It belongs to the G protein gamma family. In terms of assembly, g proteins are composed of 3 units, alpha, beta and gamma.

The protein resides in the cell membrane. Guanine nucleotide-binding proteins (G proteins) are involved as a modulator or transducer in various transmembrane signaling systems. The beta and gamma chains are required for the GTPase activity, for replacement of GDP by GTP, and for G protein-effector interaction. This chain is Guanine nucleotide-binding protein G(I)/G(S)/G(O) subunit gamma-T2 (Gngt2), found in Mus musculus (Mouse).